The chain runs to 395 residues: Long-chain-alcohol dehydrogenase 1 (395 aa).

Residues 98–102 (GSALD) and 141–144 (TTSG) contribute to the NAD(+) site.

This sequence belongs to the iron-containing alcohol dehydrogenase family. In terms of assembly, homooctamer.

It carries out the reaction glycerol + NAD(+) = dihydroxyacetone + NADH + H(+). The enzyme catalyses a long-chain primary fatty alcohol + 2 NAD(+) + H2O = a long-chain fatty acid + 2 NADH + 3 H(+). In terms of biological role, long-chain alkyl alcohol dehydrogenase that can oxidize a broad range of alkyl alcohols from ethanol to 1-triacontanol (C2 to C30) as well as 1,3-propanediol and acetaldehyde. The best substrate is ethanol. Also oxidizes glycerol. The chain is Long-chain-alcohol dehydrogenase 1 (adh1) from Geobacillus thermodenitrificans (strain NG80-2).